The sequence spans 436 residues: Trigger factor (436 aa).

The 86-residue stretch at 162 to 247 (GDRVIIDFEG…LNNVSEATLP (86 aa)) folds into the PPIase FKBP-type domain.

The protein belongs to the FKBP-type PPIase family. Tig subfamily.

Its subcellular location is the cytoplasm. It catalyses the reaction [protein]-peptidylproline (omega=180) = [protein]-peptidylproline (omega=0). Its function is as follows. Involved in protein export. Acts as a chaperone by maintaining the newly synthesized protein in an open conformation. Functions as a peptidyl-prolyl cis-trans isomerase. This chain is Trigger factor, found in Neisseria meningitidis serogroup C (strain 053442).